The sequence spans 434 residues: uncharacterized protein (434 aa).

The signal sequence occupies residues 1–17 (MTFLLFQLLVLLRYSIG). Helical transmembrane passes span 48 to 68 (AAIS…FTVL), 70 to 90 (EWVY…SVTA), 112 to 132 (YRVA…FTIF), 141 to 161 (TYGT…NAVV), 173 to 193 (WITG…RLVT), 206 to 226 (YGVH…TSFV), 232 to 252 (YCGL…LSGL), 271 to 291 (EGVY…HLGY), 305 to 325 (TSSI…TILF), 344 to 364 (WVLA…YIPL), 380 to 400 (ATFL…DTIF), and 404 to 424 (FSSL…IGTI).

It localises to the membrane. This is an uncharacterized protein from Arabidopsis thaliana (Mouse-ear cress).